The sequence spans 552 residues: MSDIAIIVSLLSLVAVLGLWIGHIKIKGVGLGIGGVLFGGIIISHCTHLYGIELDAHTLHFIQEFGLILFVYSIGIQVGPGFFASLRQSGLKLNGFAVMIVGLSGILVALIHKLFDVPLPVILGIFSGAVTNTPSLGAGQQVLTELGGDNITAVMGMSYAIAYPFGIIGILLSMWLIRIIFKVNIDKEAQEFDNNQNQQKEGLDTLNVRLTNPNLGGLKLKEIPDFESHTVIYSRLKRNDQLIVPNVDTVLNVGDVLHLVGEKATLHKMQLILGEEADVSVSTRGTIFRSERAVVTNENVFGKKIRHLMLKGKYEVVISRLNRAGVELIPNGEMALQFGDVLNLVGRQEDIETVRAIIGDAHQKLQQVQMLPIFLGIGLGVLLGSLPLYLPGFPVALKLGLAGGPLVVALILARIGSIGKLYWFMPPSANLALREIGIVLFLSVVGLKAGANFLDTLLSPEGLAWMGYGAIITFIPLIVTGFVARIYGKMNYLSLCGLLSGAMTDPPALAFANEIKDGHGAAALSYATVYPLVMFLRIILPQLLAILLWTAS.

5 consecutive transmembrane segments (helical) span residues 4-24, 29-49, 65-85, 95-115, and 161-181; these read IAII…IGHI, VGLG…CTHL, FGLI…FFAS, GFAV…HKLF, and IAYP…RIIF. RCK C-terminal domains follow at residues 190–275 and 277–360; these read QEFD…ILGE and ADVS…IIGD. A run of 6 helical transmembrane segments spans residues 370–390, 403–425, 438–458, 463–483, 492–512, and 529–549; these read MLPI…PLYL, GGPL…YWFM, IVLF…DTLL, LAWM…TGFV, YLSL…LAFA, and VYPL…ILLW.

Belongs to the AAE transporter (TC 2.A.81) family. YidE subfamily.

It localises to the cell membrane. In Actinobacillus pleuropneumoniae serotype 3 (strain JL03), this protein is Putative transport protein APJL_0985.